The sequence spans 193 residues: UPF0397 protein PA0141 (193 aa).

The next 5 membrane-spanning stretches (helical) occupy residues Val11–Ile31, Phe43–Gly63, Phe69–Leu89, Ile109–Pro129, and Gly147–Ser167.

It belongs to the UPF0397 family.

It localises to the cell membrane. The polypeptide is UPF0397 protein PA0141 (Phytoplasma australiense).